The primary structure comprises 67 residues: Protein AaeX (67 aa).

Transmembrane regions (helical) follow at residues Leu-3–Leu-23 and Phe-43–Ser-63.

This sequence belongs to the AaeX family.

The protein localises to the cell membrane. This chain is Protein AaeX, found in Escherichia coli O1:K1 / APEC.